Here is a 118-residue protein sequence, read N- to C-terminus: Heavy metal-associated isoprenylated plant protein 12 (118 aa).

The 65-residue stretch at 1 to 65 folds into the HMA domain; that stretch reads MQVVVLKLDV…KICHTEFISV (65 aa). Positions 68–87 are disordered; the sequence is VKEPEKKKPDDPKKPETKPP. The span at 69–86 shows a compositional bias: basic and acidic residues; the sequence is KEPEKKKPDDPKKPETKP. C115 carries the cysteine methyl ester modification. A lipid anchor (S-farnesyl cysteine) is attached at C115. The propeptide at 116-118 is removed in mature form; it reads VTS.

It belongs to the HIPP family.

In terms of biological role, probable heavy-metal-binding protein. The sequence is that of Heavy metal-associated isoprenylated plant protein 12 from Arabidopsis thaliana (Mouse-ear cress).